A 160-amino-acid chain; its full sequence is 3-hydroxyacyl-[acyl-carrier-protein] dehydratase FabZ (160 aa).

Histidine 60 is an active-site residue.

Belongs to the thioester dehydratase family. FabZ subfamily.

It is found in the cytoplasm. The catalysed reaction is a (3R)-hydroxyacyl-[ACP] = a (2E)-enoyl-[ACP] + H2O. Its function is as follows. Involved in unsaturated fatty acids biosynthesis. Catalyzes the dehydration of short chain beta-hydroxyacyl-ACPs and long chain saturated and unsaturated beta-hydroxyacyl-ACPs. In Rhodospirillum rubrum (strain ATCC 11170 / ATH 1.1.1 / DSM 467 / LMG 4362 / NCIMB 8255 / S1), this protein is 3-hydroxyacyl-[acyl-carrier-protein] dehydratase FabZ.